The primary structure comprises 270 residues: Undecaprenyl-diphosphatase (270 aa).

Transmembrane regions (helical) follow at residues 1 to 21 (MTWWEALLLGLIQGLTEFIPV), 92 to 112 (FRLGVFILVTLVPTGVAYVLF), 119 to 139 (AFGSPRFTSAMLVGTGVLLLL), 150 to 170 (LSGVKAFVVGVAQSCALVPGI), 193 to 213 (FSFLMLLPVVLGGTVLKGLEL), 223 to 243 (LSLGIGTVAAYGSGIGAIYVV), and 250 to 270 (GNLQYFAYYCFLIGGLGLWLL).

The protein belongs to the UppP family.

It is found in the cell inner membrane. The catalysed reaction is di-trans,octa-cis-undecaprenyl diphosphate + H2O = di-trans,octa-cis-undecaprenyl phosphate + phosphate + H(+). Catalyzes the dephosphorylation of undecaprenyl diphosphate (UPP). Confers resistance to bacitracin. The protein is Undecaprenyl-diphosphatase of Salinibacter ruber (strain DSM 13855 / M31).